Here is a 147-residue protein sequence, read N- to C-terminus: Microsomal glutathione S-transferase 2 (147 aa).

The next 3 membrane-spanning stretches (helical) occupy residues 6-26, 59-79, and 111-131; these read ILLAAVSILSACQQSYFALQV, FYPIFIITLWMAGWYFNQVFA, and SLGILALLTLLGALGIANSFL.

This sequence belongs to the MAPEG family. In terms of assembly, homotrimer. As to expression, liver, spleen, skeletal muscle, heart, adrenals, pancreas, prostate, testis, fetal liver, and fetal spleen. Very low expression in lung, brain, placenta and bone marrow. Abundantly expressed in human umbilical vein endothelial cells (at protein level).

It localises to the endoplasmic reticulum membrane. The protein localises to the microsome membrane. It carries out the reaction RX + glutathione = an S-substituted glutathione + a halide anion + H(+). The catalysed reaction is 1-chloro-2,4-dinitrobenzene + glutathione = 2,4-dinitrophenyl-S-glutathione + chloride + H(+). It catalyses the reaction leukotriene C4 = leukotriene A4 + glutathione. The enzyme catalyses (5S)-hydroperoxy-(6E,8Z,11Z,14Z)-eicosatetraenoate + 2 glutathione = (5S)-hydroxy-(6E,8Z,11Z,14Z)-eicosatetraenoate + glutathione disulfide + H2O. Each monomer can bind on GSH molecule but only one subunit is catalytically active. Its function is as follows. Catalyzes several different glutathione-dependent reactions. Catalyzes the glutathione-dependent reduction of lipid hydroperoxides, such as 5-HPETE. Has glutathione transferase activity, toward xenobiotic electrophiles, such as 1-chloro-2, 4-dinitrobenzene (CDNB). Also catalyzes the conjugation of leukotriene A4 with reduced glutathione to form leukotriene C4 (LTC4). Involved in oxidative DNA damage induced by ER stress and anticancer agents by activating LTC4 biosynthetic machinery in nonimmune cells. This is Microsomal glutathione S-transferase 2 (MGST2) from Homo sapiens (Human).